Reading from the N-terminus, the 359-residue chain is Phosphoserine aminotransferase (359 aa).

2 residues coordinate L-glutamate: serine 9 and arginine 42. Residues 76–77 (AS), tryptophan 102, threonine 152, aspartate 171, and glutamine 194 each bind pyridoxal 5'-phosphate. Position 195 is an N6-(pyridoxal phosphate)lysine (lysine 195). Residue 236–237 (NT) participates in pyridoxal 5'-phosphate binding.

It belongs to the class-V pyridoxal-phosphate-dependent aminotransferase family. SerC subfamily. Homodimer. The cofactor is pyridoxal 5'-phosphate.

The protein localises to the cytoplasm. It catalyses the reaction O-phospho-L-serine + 2-oxoglutarate = 3-phosphooxypyruvate + L-glutamate. The enzyme catalyses 4-(phosphooxy)-L-threonine + 2-oxoglutarate = (R)-3-hydroxy-2-oxo-4-phosphooxybutanoate + L-glutamate. It participates in amino-acid biosynthesis; L-serine biosynthesis; L-serine from 3-phospho-D-glycerate: step 2/3. It functions in the pathway cofactor biosynthesis; pyridoxine 5'-phosphate biosynthesis; pyridoxine 5'-phosphate from D-erythrose 4-phosphate: step 3/5. Functionally, catalyzes the reversible conversion of 3-phosphohydroxypyruvate to phosphoserine and of 3-hydroxy-2-oxo-4-phosphonooxybutanoate to phosphohydroxythreonine. The sequence is that of Phosphoserine aminotransferase from Marinomonas sp. (strain MWYL1).